We begin with the raw amino-acid sequence, 192 residues long: Peptide deformylase 1 (192 aa).

Residues Cys101 and His143 each contribute to the Fe cation site. Glu144 is a catalytic residue. Residue His147 coordinates Fe cation.

Belongs to the polypeptide deformylase family. Fe(2+) is required as a cofactor.

It catalyses the reaction N-terminal N-formyl-L-methionyl-[peptide] + H2O = N-terminal L-methionyl-[peptide] + formate. In terms of biological role, removes the formyl group from the N-terminal Met of newly synthesized proteins. Requires at least a dipeptide for an efficient rate of reaction. N-terminal L-methionine is a prerequisite for activity but the enzyme has broad specificity at other positions. The polypeptide is Peptide deformylase 1 (Prochlorococcus marinus (strain MIT 9313)).